The chain runs to 1997 residues: Receptor-type tyrosine-protein phosphatase beta (1997 aa).

The first 22 residues, 1–22 (MLSHGAGLALWITLSLLQTGLA), serve as a signal peptide directing secretion. 17 Fibronectin type-III domains span residues 23–111 (EPER…TDPL), 112–207 (PPAR…SPVK), 203–288 (PSPV…VRTA), 291–378 (EVSN…TFPD), 379–471 (KVAN…LAVL), 467–552 (PLAV…KGRT), 556–641 (QVTD…EGRT), 642–729 (VPSS…QERT), 730–829 (VPDK…TLRN), 819–906 (PEPV…GFTV), 909–1001 (AVKN…VQGV), 995–1083 (PASV…EGRT), 1087–1175 (AVTD…VPAS), 1173–1260 (PASV…SRTA), 1260–1356 (APSP…TKPD), 1357–1448 (KIQN…IDRP), and 1458–1554 (NEKD…EMES). Topologically, residues 23 to 1621 (EPERCNFTLA…ESEPLFGAIE (1599 aa)) are extracellular. N-linked (GlcNAc...) asparagine glycans are attached at residues asparagine 28, asparagine 53, asparagine 75, asparagine 172, asparagine 198, asparagine 267, asparagine 321, asparagine 414, asparagine 421, asparagine 479, asparagine 544, asparagine 574, asparagine 598, asparagine 652, asparagine 721, and asparagine 829. 10 N-linked (GlcNAc...) asparagine glycosylation sites follow: asparagine 1040, asparagine 1096, asparagine 1163, asparagine 1185, asparagine 1212, asparagine 1274, asparagine 1367, asparagine 1470, asparagine 1474, and asparagine 1518. A helical membrane pass occupies residues 1622–1642 (GVSAGLFLIGMLVAVVALLIC). Residues 1643-1997 (RQKVSHGRER…YHRDPVYSRH (355 aa)) lie on the Cytoplasmic side of the membrane. Residues 1703–1963 (LSKEYEELKD…VYLHQCVRDV (261 aa)) enclose the Tyrosine-protein phosphatase domain. Residues aspartate 1870, 1904 to 1910 (CSAGVGR), and glutamine 1948 each bind substrate. Cysteine 1904 serves as the catalytic Phosphocysteine intermediate. Tyrosine 1981 is subject to Phosphotyrosine.

This sequence belongs to the protein-tyrosine phosphatase family. Receptor class 3 subfamily. Monomer. Interacts with TEK. Interacts via fibronectin type-III 17 domain with CDH5. Detected in a complex with CNTN1 and NRCAM. Interacts (phosphorylated form) with FYN and GRB2. Interacts with IGFBP2.

Its subcellular location is the membrane. The enzyme catalyses O-phospho-L-tyrosyl-[protein] + H2O = L-tyrosyl-[protein] + phosphate. In terms of biological role, plays an important role in blood vessel remodeling and angiogenesis. Not necessary for the initial formation of blood vessels, but is essential for their maintenance and remodeling. Can induce dephosphorylation of TEK/TIE2, CDH5/VE-cadherin and KDR/VEGFR-2. Regulates angiopoietin-TIE2 signaling in endothelial cells. Acts as a negative regulator of TIE2, and controls TIE2 driven endothelial cell proliferation, which in turn affects blood vessel remodeling during embryonic development and determines blood vessel size during perinatal growth. Essential for the maintenance of endothelial cell contact integrity and for the adhesive function of VE-cadherin in endothelial cells and this requires the presence of plakoglobin. In Homo sapiens (Human), this protein is Receptor-type tyrosine-protein phosphatase beta (PTPRB).